Consider the following 123-residue polypeptide: Large ribosomal subunit protein uL18 (123 aa).

The protein belongs to the universal ribosomal protein uL18 family. In terms of assembly, part of the 50S ribosomal subunit; part of the 5S rRNA/L5/L18/L25 subcomplex. Contacts the 5S and 23S rRNAs.

Functionally, this is one of the proteins that bind and probably mediate the attachment of the 5S RNA into the large ribosomal subunit, where it forms part of the central protuberance. In Chlamydia felis (strain Fe/C-56) (Chlamydophila felis), this protein is Large ribosomal subunit protein uL18.